The primary structure comprises 628 residues: DNA mismatch repair protein MutL (628 aa).

The tract at residues 350–402 (GLPFDVSESQGNDNHINNGKSRETKSERELYERRPNPFENRLMKESNSPSVGK) is disordered. A compositionally biased stretch (polar residues) spans 356–368 (SESQGNDNHINNG). Residues 369–393 (KSRETKSERELYERRPNPFENRLMK) are compositionally biased toward basic and acidic residues.

The protein belongs to the DNA mismatch repair MutL/HexB family.

In terms of biological role, this protein is involved in the repair of mismatches in DNA. It is required for dam-dependent methyl-directed DNA mismatch repair. May act as a 'molecular matchmaker', a protein that promotes the formation of a stable complex between two or more DNA-binding proteins in an ATP-dependent manner without itself being part of a final effector complex. The protein is DNA mismatch repair protein MutL of Wolbachia sp. subsp. Brugia malayi (strain TRS).